Reading from the N-terminus, the 2609-residue chain is Beige protein homolog 1 (2609 aa).

2 disordered regions span residues 1654 to 1679 and 1691 to 1729; these read DSKL…APVS and ILPS…KNRT. Residues 1711–1723 show a composition bias toward acidic residues; sequence MEDEEDDVDEEDK. Positions 1735–1870 constitute a BEACH-type PH domain; sequence ESGDSIQDVY…NRDSLYQKLV (136 aa). In terms of domain architecture, BEACH spans 1907-2202; sequence ANALSFSTTH…QVFKKPHPQR (296 aa). 5 WD repeats span residues 2249–2290, 2294–2332, 2340–2379, 2429–2475, and 2507–2546; these read KDEV…QPVM, LHSE…PIKA, GHRY…FVSS, NSDE…NAKL, and ATRQ…SNVH. The FYVE-type zinc-finger motif lies at 2550–2604; it reads DNTSELCSLCDSRFSLMEWRSQCRACGNSNVCSDCVSMLKDTNIKTCYECYRQMP.

Its subcellular location is the cytoplasm. The protein localises to the membrane. May be involved in protein sorting and cell wall formation. The chain is Beige protein homolog 1 (lvs1) from Schizosaccharomyces pombe (strain 972 / ATCC 24843) (Fission yeast).